The chain runs to 558 residues: Pentatricopeptide repeat-containing protein At1g06140, mitochondrial (558 aa).

The N-terminal 79 residues, 1-79, are a transit peptide targeting the mitochondrion; that stretch reads MLPVNRARAL…RNRHSWNTIL (79 aa). PPR repeat units lie at residues 38–68, 71–103, 108–142, 143–173, 174–208, 209–243, 245–275, 276–310, 311–345, 346–376, 377–411, 412–447, and 448–482; these read EVVLGSSLTNAYIQSNRLDFATSSFNRIPCW, NRHSWNTILSGYSKSKTCCYSDVLLLYNRMRRH, DSFNLVFAIKACVGLGLLENGILIHGLAMKNGLDK, DDYVAPSLVEMYAQLGTMESAQKVFDEIPVR, NSVLWGVLMKGYLKYSKDPEVFRLFCLMRDTGLAL, DALTLICLVKACGNVFAGKVGKCVHGVSIRRSFID, SDYLQASIIDMYVKCRLLDNARKLFETSVDR, NVVMWTTLISGFAKCERAVEAFDLFRQMLRESILP, NQCTLAAILVSCSSLGSLRHGKSVHGYMIRNGIEM, DAVNFTSFIDMYARCGNIQMARTVFDMMPER, NVISWSSMINAFGINGLFEEALDCFHKMKSQNVVP, NSVTFVSLLSACSHSGNVKEGWKQFESMTRDYGVVP, and EEEHYACMVDLLGRAGEIGEAKSFIDNMPVKPMAS. The type E motif stretch occupies residues 483–558; sequence AWGALLSACR…HVGQSATEVG (76 aa).

The protein belongs to the PPR family. PCMP-E subfamily.

The protein resides in the mitochondrion. The protein is Pentatricopeptide repeat-containing protein At1g06140, mitochondrial (PCMP-E61) of Arabidopsis thaliana (Mouse-ear cress).